The sequence spans 98 residues: NADH-ubiquinone oxidoreductase chain 4L (98 aa).

Helical transmembrane passes span 1–21 (MTLI…GLLM), 29–49 (ALLC…LTIL), and 61–81 (IILL…LVTI).

Belongs to the complex I subunit 4L family. As to quaternary structure, core subunit of respiratory chain NADH dehydrogenase (Complex I) which is composed of 45 different subunits.

It localises to the mitochondrion inner membrane. The enzyme catalyses a ubiquinone + NADH + 5 H(+)(in) = a ubiquinol + NAD(+) + 4 H(+)(out). Core subunit of the mitochondrial membrane respiratory chain NADH dehydrogenase (Complex I) which catalyzes electron transfer from NADH through the respiratory chain, using ubiquinone as an electron acceptor. Part of the enzyme membrane arm which is embedded in the lipid bilayer and involved in proton translocation. In Eubalaena australis (Southern right whale), this protein is NADH-ubiquinone oxidoreductase chain 4L (MT-ND4L).